A 498-amino-acid polypeptide reads, in one-letter code: ATP synthase subunit beta, chloroplastic (498 aa).

Residue 172–179 (GGAGVGKT) participates in ATP binding.

It belongs to the ATPase alpha/beta chains family. As to quaternary structure, F-type ATPases have 2 components, CF(1) - the catalytic core - and CF(0) - the membrane proton channel. CF(1) has five subunits: alpha(3), beta(3), gamma(1), delta(1), epsilon(1). CF(0) has four main subunits: a(1), b(1), b'(1) and c(9-12).

Its subcellular location is the plastid. The protein localises to the chloroplast thylakoid membrane. It catalyses the reaction ATP + H2O + 4 H(+)(in) = ADP + phosphate + 5 H(+)(out). Produces ATP from ADP in the presence of a proton gradient across the membrane. The catalytic sites are hosted primarily by the beta subunits. This chain is ATP synthase subunit beta, chloroplastic, found in Balaka seemannii.